Here is a 298-residue protein sequence, read N- to C-terminus: 3-deoxy-manno-octulosonate cytidylyltransferase (298 aa).

Residues Val22–Leu42 form a helical membrane-spanning segment.

Belongs to the KdsB family. Mg(2+) serves as cofactor. Ubiquitous.

Its subcellular location is the membrane. The enzyme catalyses 3-deoxy-alpha-D-manno-oct-2-ulosonate + CTP = CMP-3-deoxy-beta-D-manno-octulosonate + diphosphate. The protein operates within nucleotide-sugar biosynthesis; CMP-3-deoxy-D-manno-octulosonate biosynthesis; CMP-3-deoxy-D-manno-octulosonate from 3-deoxy-D-manno-octulosonate and CTP: step 1/1. Catalyzes the production of the sugar nucleotide CMP-3-deoxy-D-manno-octulosonate (CMP-KDO). CTP is the preferred nucleotide donor, and it can partially be replaced with UTP but not with ATP. Activates KDO during the biosynthesis of rhamnogalacturonan II (RG-II), a structurally complex pectic polysaccharide of the primary cell wall. RG-II is essential for the cell wall integrity of rapidly growing tissues and pollen tube growth and elongation. This Zea mays (Maize) protein is 3-deoxy-manno-octulosonate cytidylyltransferase.